A 498-amino-acid polypeptide reads, in one-letter code: Glutamate--tRNA ligase (498 aa).

The short motif at 11–21 (PSPTGHLHIGN) is the 'HIGH' region element. The short motif at 261–265 (KLSKR) is the 'KMSKS' region element. An ATP-binding site is contributed by Lys-264.

It belongs to the class-I aminoacyl-tRNA synthetase family. Glutamate--tRNA ligase type 1 subfamily. As to quaternary structure, monomer.

Its subcellular location is the cytoplasm. The enzyme catalyses tRNA(Glu) + L-glutamate + ATP = L-glutamyl-tRNA(Glu) + AMP + diphosphate. In terms of biological role, catalyzes the attachment of glutamate to tRNA(Glu) in a two-step reaction: glutamate is first activated by ATP to form Glu-AMP and then transferred to the acceptor end of tRNA(Glu). This Oenococcus oeni (strain ATCC BAA-331 / PSU-1) protein is Glutamate--tRNA ligase.